The chain runs to 430 residues: Aspartate aminotransferase, mitochondrial (430 aa).

The transit peptide at 1-29 directs the protein to the mitochondrion; the sequence is MALLHSGRALPGIAAAFHPGLAAAASARA. Threonine 48 carries the phosphothreonine modification. Lysine 59 is modified (N6-acetyllysine). Residue glycine 65 coordinates substrate. Lysine 73 is modified (N6-acetyllysine; alternate). Residue lysine 73 is modified to N6-succinyllysine; alternate. Lysine 82 is modified (N6-acetyllysine). Lysine 90 carries the N6-acetyllysine; alternate modification. At lysine 90 the chain carries N6-succinyllysine; alternate. Tyrosine 96 carries the 3'-nitrotyrosine; alternate modification. Tyrosine 96 carries the post-translational modification Phosphotyrosine; alternate. An N6-acetyllysine; alternate mark is found at lysine 107 and lysine 122. Residues lysine 107 and lysine 122 each carry the N6-succinyllysine; alternate modification. Residue serine 143 is modified to Phosphoserine. Position 159 is an N6-acetyllysine; alternate (lysine 159). At lysine 159 the chain carries N6-succinyllysine; alternate. Tryptophan 162 is a substrate binding site. The residue at position 185 (lysine 185) is an N6-acetyllysine; alternate. Lysine 185 is subject to N6-succinyllysine; alternate. Asparagine 215 is a substrate binding site. Lysine 227 bears the N6-succinyllysine mark. Position 234 is an N6-acetyllysine (lysine 234). N6-acetyllysine; alternate occurs at positions 279 and 296. Lysine 279 is subject to N6-(pyridoxal phosphate)lysine; alternate. The residue at position 296 (lysine 296) is an N6-succinyllysine; alternate. At lysine 302 the chain carries N6-acetyllysine. Lysine 309 carries the post-translational modification N6-acetyllysine; alternate. At lysine 309 the chain carries N6-succinyllysine; alternate. Arginine 313 carries the post-translational modification Asymmetric dimethylarginine. Threonine 333 carries the post-translational modification Phosphothreonine. An N6-acetyllysine; alternate modification is found at lysine 338. N6-succinyllysine; alternate is present on lysine 338. Position 345 is an N6-acetyllysine (lysine 345). N6-acetyllysine; alternate is present on lysine 363. Lysine 363 carries the post-translational modification N6-succinyllysine; alternate. N6-acetyllysine occurs at positions 364 and 387. An N6-acetyllysine; alternate mark is found at lysine 396 and lysine 404. Residues lysine 396 and lysine 404 each carry the N6-succinyllysine; alternate modification. Arginine 407 serves as a coordination point for substrate.

This sequence belongs to the class-I pyridoxal-phosphate-dependent aminotransferase family. Homodimer. Pyridoxal 5'-phosphate serves as cofactor.

It localises to the mitochondrion matrix. It is found in the cell membrane. The enzyme catalyses L-aspartate + 2-oxoglutarate = oxaloacetate + L-glutamate. It carries out the reaction L-kynurenine + 2-oxoglutarate = kynurenate + L-glutamate + H2O. Functionally, catalyzes the irreversible transamination of the L-tryptophan metabolite L-kynurenine to form kynurenic acid (KA). As a member of the malate-aspartate shuttle, it has a key role in the intracellular NAD(H) redox balance. Is important for metabolite exchange between mitochondria and cytosol, and for amino acid metabolism. Facilitates cellular uptake of long-chain free fatty acids. The polypeptide is Aspartate aminotransferase, mitochondrial (GOT2) (Pongo abelii (Sumatran orangutan)).